The sequence spans 472 residues: Serine incorporator 3 (472 aa).

At 1–95 (MGAVLGVFSL…KECDVLVRYK (95 aa)) the chain is on the extracellular side. N-linked (GlcNAc...) asparagine glycosylation occurs at asparagine 34. The chain crosses the membrane as a helical span at residues 96-116 (AVYRISFALAVFFFAFSLLML). At 117–131 (NVKTSKDPRAAIHNG) the chain is on the cytoplasmic side. The chain crosses the membrane as a helical span at residues 132–152 (FWFFKIAAIVGVMVGSFYIPG). Residues 153–158 (GHFNTA) lie on the Extracellular side of the membrane. A helical transmembrane segment spans residues 159-179 (WFVIGMVGAAFFILIQLVLLV). The Cytoplasmic portion of the chain corresponds to 180–202 (DFAHSWNESWVNRMEEGNPKCWY). The chain crosses the membrane as a helical span at residues 203–223 (AALLSVTSLFYILSIIFAGLL). The Extracellular portion of the chain corresponds to 224 to 238 (YTYYTKPDGCTENKF). A helical transmembrane segment spans residues 239-259 (FISFNLILCVVISVLSIHPKI). The Cytoplasmic portion of the chain corresponds to 260 to 328 (QEHQPRSGLL…APTPAVPLQS (69 aa)). The helical transmembrane segment at 329-349 (GPSLNKENFIGLLVFVLSLSY) threads the bilayer. Over 350–405 (SSIRNSSNSQVSKLTLSGSDSVILRDTAANGASDEEDGRPRRAVDNEREGVQYNYS) the chain is Extracellular. The N-linked (GlcNAc...) asparagine glycan is linked to asparagine 354. Serine 370 carries the phosphoserine modification. N-linked (GlcNAc...) asparagine glycosylation occurs at asparagine 403. Residues 406 to 426 (MFHLMLCSASLYIMMTLTNWY) traverse the membrane as a helical segment. Residues 427 to 445 (SPDANFQSMTSKWPAVWVK) lie on the Cytoplasmic side of the membrane. A helical transmembrane segment spans residues 446-466 (ISSSWVCLLLYVWTLVAPLVL). The Extracellular segment spans residues 467–472 (TNRDFS).

This sequence belongs to the TDE1 family. Post-translationally, N-glycosylated.

The protein localises to the cell membrane. It localises to the golgi apparatus membrane. The catalysed reaction is a 1,2-diacyl-sn-glycero-3-phospho-L-serine(in) = a 1,2-diacyl-sn-glycero-3-phospho-L-serine(out). It carries out the reaction a 1,2-diacyl-sn-glycero-3-phosphocholine(in) = a 1,2-diacyl-sn-glycero-3-phosphocholine(out). The enzyme catalyses a 1,2-diacyl-sn-glycero-3-phosphoethanolamine(in) = a 1,2-diacyl-sn-glycero-3-phosphoethanolamine(out). Restriction factor required to restrict infectivity of gammaretroviruses: acts by inhibiting an early step of viral infection. Impairs the penetration of the viral particle into the cytoplasm. Non-ATP-dependent, non-specific lipid transporter for phosphatidylserine, phosphatidylcholine, and phosphatidylethanolamine. Functions as a scramblase that flips lipids in both directions across the membrane. Phospholipid scrambling results in gammaretroviral surface exposure of phosphatidylserine and loss of membrane asymmetry, which leads to loss of infectivity. The protein is Serine incorporator 3 (SERINC3) of Bos taurus (Bovine).